Reading from the N-terminus, the 276-residue chain is UDP-3-O-acyl-N-acetylglucosamine deacetylase (276 aa).

Zn(2+)-binding residues include His-76, His-234, and Asp-238. The active-site Proton donor is the His-261.

This sequence belongs to the LpxC family. Requires Zn(2+) as cofactor.

The catalysed reaction is a UDP-3-O-[(3R)-3-hydroxyacyl]-N-acetyl-alpha-D-glucosamine + H2O = a UDP-3-O-[(3R)-3-hydroxyacyl]-alpha-D-glucosamine + acetate. The protein operates within glycolipid biosynthesis; lipid IV(A) biosynthesis; lipid IV(A) from (3R)-3-hydroxytetradecanoyl-[acyl-carrier-protein] and UDP-N-acetyl-alpha-D-glucosamine: step 2/6. Functionally, catalyzes the hydrolysis of UDP-3-O-myristoyl-N-acetylglucosamine to form UDP-3-O-myristoylglucosamine and acetate, the committed step in lipid A biosynthesis. The protein is UDP-3-O-acyl-N-acetylglucosamine deacetylase of Synechocystis sp. (strain ATCC 27184 / PCC 6803 / Kazusa).